We begin with the raw amino-acid sequence, 537 residues long: CTP synthase (537 aa).

An amidoligase domain region spans residues 1-265 (MTKYIFVTGG…GKYLTKRLKL (265 aa)). Residue Ser-13 coordinates CTP. Residue Ser-13 participates in UTP binding. 14–19 (GLGKGI) contributes to the ATP binding site. Tyr-54 contacts L-glutamine. Residue Asp-71 coordinates ATP. Mg(2+) contacts are provided by Asp-71 and Glu-139. CTP is bound by residues 146-148 (DIE), 186-191 (KTKPTQ), and Lys-222. UTP is bound by residues 186-191 (KTKPTQ) and Lys-222. Residues 290–532 (EIAIVGKYVK…VRAAKEYKQE (243 aa)) form the Glutamine amidotransferase type-1 domain. Gly-351 is a binding site for L-glutamine. The Nucleophile; for glutamine hydrolysis role is filled by Cys-378. L-glutamine contacts are provided by residues 379-382 (FGFQ), Glu-402, and Arg-459. Active-site residues include His-505 and Glu-507.

This sequence belongs to the CTP synthase family. As to quaternary structure, homotetramer.

The catalysed reaction is UTP + L-glutamine + ATP + H2O = CTP + L-glutamate + ADP + phosphate + 2 H(+). It catalyses the reaction L-glutamine + H2O = L-glutamate + NH4(+). It carries out the reaction UTP + NH4(+) + ATP = CTP + ADP + phosphate + 2 H(+). Its pathway is pyrimidine metabolism; CTP biosynthesis via de novo pathway; CTP from UDP: step 2/2. Allosterically activated by GTP, when glutamine is the substrate; GTP has no effect on the reaction when ammonia is the substrate. The allosteric effector GTP functions by stabilizing the protein conformation that binds the tetrahedral intermediate(s) formed during glutamine hydrolysis. Inhibited by the product CTP, via allosteric rather than competitive inhibition. Its function is as follows. Catalyzes the ATP-dependent amination of UTP to CTP with either L-glutamine or ammonia as the source of nitrogen. Regulates intracellular CTP levels through interactions with the four ribonucleotide triphosphates. In Pyrococcus furiosus (strain ATCC 43587 / DSM 3638 / JCM 8422 / Vc1), this protein is CTP synthase.